A 35-amino-acid polypeptide reads, in one-letter code: Malate dehydrogenase, mitochondrial (35 aa).

Residue asparagine 7 participates in NAD(+) binding. Arginine 23 contributes to the substrate binding site.

This sequence belongs to the LDH/MDH superfamily. MDH type 1 family. Homodimer.

The protein localises to the mitochondrion matrix. The enzyme catalyses (S)-malate + NAD(+) = oxaloacetate + NADH + H(+). This Capsicum annuum var. annuum (Red pepper) protein is Malate dehydrogenase, mitochondrial.